Here is a 210-residue protein sequence, read N- to C-terminus: Large ribosomal subunit protein bL25 (210 aa).

Residues 179–210 (LPPQQEEEIHSGEQQEPGHPDAEEGRETTPES) form a disordered region. A compositionally biased stretch (basic and acidic residues) spans 185–210 (EEIHSGEQQEPGHPDAEEGRETTPES).

Belongs to the bacterial ribosomal protein bL25 family. CTC subfamily. In terms of assembly, part of the 50S ribosomal subunit; part of the 5S rRNA/L5/L18/L25 subcomplex. Contacts the 5S rRNA. Binds to the 5S rRNA independently of L5 and L18.

Functionally, this is one of the proteins that binds to the 5S RNA in the ribosome where it forms part of the central protuberance. This chain is Large ribosomal subunit protein bL25, found in Geobacillus sp. (strain WCH70).